Consider the following 361-residue polypeptide: MSKRAFNFCAGPAALPDAVLQRAQAELLDWRGKGLSVMEMSHRSDDYVAIASKAEHDLRDLLDIPSDYKVLFLQGGASQQFAEIPLNLLPEDGVADYIDTGIWSKKAIEEARRYGRVNVAASAKEYDYFAIPGQNEWNLTKDAAYVHYASNETIGGLEFDWIPETGGVPLVTDMSSDILSRPLDVSRFGLIYAGAQKNIGPSGLVVVIVREDLLGRARSACPTMLNYKIAADNGSMYNTPATYSWYLSGLVFEWLKEQGGVTAMERRNRAKKDLLYKTIDASDFYTNPIQPSARSWMNVPFRLADERLDKPFLEGAEARGLLNLKGHRSVGGMRASIYNALGLDAVEALVAYMAEFEKERG.

Arg43 lines the L-glutamate pocket. Pyridoxal 5'-phosphate is bound by residues 77 to 78, Trp103, Thr153, Asp173, and Gln196; that span reads AS. Position 197 is an N6-(pyridoxal phosphate)lysine (Lys197). Residue 238 to 239 coordinates pyridoxal 5'-phosphate; sequence NT.

Belongs to the class-V pyridoxal-phosphate-dependent aminotransferase family. SerC subfamily. In terms of assembly, homodimer. Pyridoxal 5'-phosphate serves as cofactor.

It is found in the cytoplasm. It carries out the reaction O-phospho-L-serine + 2-oxoglutarate = 3-phosphooxypyruvate + L-glutamate. The catalysed reaction is 4-(phosphooxy)-L-threonine + 2-oxoglutarate = (R)-3-hydroxy-2-oxo-4-phosphooxybutanoate + L-glutamate. It functions in the pathway amino-acid biosynthesis; L-serine biosynthesis; L-serine from 3-phospho-D-glycerate: step 2/3. It participates in cofactor biosynthesis; pyridoxine 5'-phosphate biosynthesis; pyridoxine 5'-phosphate from D-erythrose 4-phosphate: step 3/5. In terms of biological role, catalyzes the reversible conversion of 3-phosphohydroxypyruvate to phosphoserine and of 3-hydroxy-2-oxo-4-phosphonooxybutanoate to phosphohydroxythreonine. This chain is Phosphoserine aminotransferase, found in Pseudomonas paraeruginosa (strain DSM 24068 / PA7) (Pseudomonas aeruginosa (strain PA7)).